The primary structure comprises 448 residues: Bifunctional protein GlmU (448 aa).

The segment at 1-230 (MRSCLSIVLA…FDNIVGINNC (230 aa)) is pyrophosphorylase. Residues 9-12 (LAAG), K23, Q76, and 81-82 (GT) contribute to the UDP-N-acetyl-alpha-D-glucosamine site. D106 is a binding site for Mg(2+). UDP-N-acetyl-alpha-D-glucosamine is bound by residues G142, E156, N171, and N228. N228 contacts Mg(2+). Residues 231-251 (FELFEADSLWQKRKARDLMLS) are linker. The tract at residues 252–448 (GVTILKPETV…VRLSGNQQKK (197 aa)) is N-acetyltransferase. UDP-N-acetyl-alpha-D-glucosamine contacts are provided by R317 and K335. The active-site Proton acceptor is the H347. UDP-N-acetyl-alpha-D-glucosamine-binding residues include Y350 and N361. Residues A364, 370–371 (NY), S389, S407, and R424 contribute to the acetyl-CoA site.

This sequence in the N-terminal section; belongs to the N-acetylglucosamine-1-phosphate uridyltransferase family. It in the C-terminal section; belongs to the transferase hexapeptide repeat family. As to quaternary structure, homotrimer. It depends on Mg(2+) as a cofactor.

It localises to the cytoplasm. The enzyme catalyses alpha-D-glucosamine 1-phosphate + acetyl-CoA = N-acetyl-alpha-D-glucosamine 1-phosphate + CoA + H(+). The catalysed reaction is N-acetyl-alpha-D-glucosamine 1-phosphate + UTP + H(+) = UDP-N-acetyl-alpha-D-glucosamine + diphosphate. It participates in nucleotide-sugar biosynthesis; UDP-N-acetyl-alpha-D-glucosamine biosynthesis; N-acetyl-alpha-D-glucosamine 1-phosphate from alpha-D-glucosamine 6-phosphate (route II): step 2/2. It functions in the pathway nucleotide-sugar biosynthesis; UDP-N-acetyl-alpha-D-glucosamine biosynthesis; UDP-N-acetyl-alpha-D-glucosamine from N-acetyl-alpha-D-glucosamine 1-phosphate: step 1/1. The protein operates within bacterial outer membrane biogenesis; LPS lipid A biosynthesis. Catalyzes the last two sequential reactions in the de novo biosynthetic pathway for UDP-N-acetylglucosamine (UDP-GlcNAc). The C-terminal domain catalyzes the transfer of acetyl group from acetyl coenzyme A to glucosamine-1-phosphate (GlcN-1-P) to produce N-acetylglucosamine-1-phosphate (GlcNAc-1-P), which is converted into UDP-GlcNAc by the transfer of uridine 5-monophosphate (from uridine 5-triphosphate), a reaction catalyzed by the N-terminal domain. The sequence is that of Bifunctional protein GlmU from Bartonella quintana (strain Toulouse) (Rochalimaea quintana).